A 221-amino-acid polypeptide reads, in one-letter code: Thymine/uracil-DNA glycosylase (221 aa).

A HhH domain is found at 105-133 (DYGGRVPRNRKAILDLPGVGKYTCAAVMC). Residues C197, C204, C207, and C213 each coordinate [4Fe-4S] cluster.

This sequence belongs to the Nth/MutY family. [4Fe-4S] cluster serves as cofactor.

The catalysed reaction is Hydrolyzes mismatched double-stranded DNA and polynucleotides, releasing free thymine.. Functionally, DNA glycosylase that excises thymine from T/G mismatches and uracil from U/G mismatches. Acts as a repair enzyme able to counteract the mutagenic effect of spontaneous hydrolytic deamination of DNA 5-methylcytosine (5-meC) residues that leads to the formation of T/G mismatches. May also repair U/G mismatches arising from hydrolytic deamination of DNA cytosine residues. G/G, A/G, T/C and U/C are minor substrates. In Methanothermobacter thermautotrophicus (Methanobacterium thermoformicicum), this protein is Thymine/uracil-DNA glycosylase.